Consider the following 457-residue polypeptide: ATP synthase subunit beta (457 aa).

147-154 (GGAGVGKT) is a binding site for ATP.

This sequence belongs to the ATPase alpha/beta chains family. As to quaternary structure, F-type ATPases have 2 components, CF(1) - the catalytic core - and CF(0) - the membrane proton channel. CF(1) has five subunits: alpha(3), beta(3), gamma(1), delta(1), epsilon(1). CF(0) has three main subunits: a(1), b(2) and c(9-12). The alpha and beta chains form an alternating ring which encloses part of the gamma chain. CF(1) is attached to CF(0) by a central stalk formed by the gamma and epsilon chains, while a peripheral stalk is formed by the delta and b chains.

It localises to the cell inner membrane. The enzyme catalyses ATP + H2O + 4 H(+)(in) = ADP + phosphate + 5 H(+)(out). Produces ATP from ADP in the presence of a proton gradient across the membrane. The catalytic sites are hosted primarily by the beta subunits. This chain is ATP synthase subunit beta, found in Actinobacillus pleuropneumoniae serotype 5b (strain L20).